The following is a 129-amino-acid chain: Large ribosomal subunit protein bL17 (129 aa).

Belongs to the bacterial ribosomal protein bL17 family. In terms of assembly, part of the 50S ribosomal subunit. Contacts protein L32.

The chain is Large ribosomal subunit protein bL17 from Yersinia pseudotuberculosis serotype O:1b (strain IP 31758).